Reading from the N-terminus, the 219-residue chain is Uracil-DNA glycosylase (219 aa).

The active-site Proton acceptor is the Asp62.

This sequence belongs to the uracil-DNA glycosylase (UDG) superfamily. UNG family.

Its subcellular location is the cytoplasm. The enzyme catalyses Hydrolyzes single-stranded DNA or mismatched double-stranded DNA and polynucleotides, releasing free uracil.. In terms of biological role, excises uracil residues from the DNA which can arise as a result of misincorporation of dUMP residues by DNA polymerase or due to deamination of cytosine. In Lactococcus lactis subsp. cremoris (strain MG1363), this protein is Uracil-DNA glycosylase.